The primary structure comprises 66 residues: Vesicular acetylcholine transporter (66 aa).

Residues 1 to 15 (GMGLANLLYAPVLLL) form a helical membrane-spanning segment. Over 16–66 (LRNVGLLTRSRSERDVLLDEPPQGLYDAVRLRERPVSGQDGEPRSPPGPFD) the chain is Cytoplasmic. The disordered stretch occupies residues 43 to 66 (AVRLRERPVSGQDGEPRSPPGPFD).

It belongs to the major facilitator superfamily. Vesicular transporter family. In terms of assembly, interacts with SEC14L1.

Its subcellular location is the cytoplasmic vesicle. It localises to the secretory vesicle. The protein resides in the synaptic vesicle membrane. It carries out the reaction acetylcholine(out) + 2 H(+)(in) = acetylcholine(in) + 2 H(+)(out). The catalysed reaction is choline(in) + 2 H(+)(out) = choline(out) + 2 H(+)(in). The enzyme catalyses serotonin(in) + 2 H(+)(out) = serotonin(out) + 2 H(+)(in). In terms of biological role, electrogenic antiporter that exchanges one cholinergic neurotransmitter, acetylcholine or choline, with two intravesicular protons across the membrane of synaptic vesicles. Uses the electrochemical proton gradient established by the V-type proton-pump ATPase to store neurotransmitters inside the vesicles prior to their release via exocytosis. Determines cholinergic vesicular quantal size at presynaptic nerve terminals in developing neuro-muscular junctions with an impact on motor neuron differentiation and innervation pattern. Part of forebrain cholinergic system, regulates hippocampal synapse transmissions that underlie spatial memory formation. Can transport serotonin. The sequence is that of Vesicular acetylcholine transporter (SLC18A3) from Macaca fuscata fuscata (Japanese macaque).